Consider the following 1161-residue polypeptide: Immunoglobulin superfamily member 3 (1161 aa).

The N-terminal stretch at 1–16 (MGTAALLILLAGVSWA) is a signal peptide. Residues 17–1091 (QREVAIQPGP…LQSTICANDA (1075 aa)) lie on the Extracellular side of the membrane. Ig-like C2-type domains are found at residues 18 to 135 (REVA…AKVN), 140 to 258 (PDTL…WFPL), 272 to 382 (PTDK…RGPS), 402 to 523 (PLRT…WQLL), 541 to 651 (FAVT…RETS), 674 to 796 (PRLQ…EETS), 806 to 930 (PDAN…WYRR), and 947 to 1063 (PQLQ…WYLL). 2 disulfides stabilise this stretch: Cys-39/Cys-117 and Cys-164/Cys-242. The EWI motif motif lies at 246-248 (EWI). 6 cysteine pairs are disulfide-bonded: Cys-298/Cys-372, Cys-428/Cys-507, Cys-562/Cys-641, Cys-697/Cys-775, Cys-831/Cys-914, and Cys-970/Cys-1047. Residues 1092 to 1112 (LFYLVFFYPFPIFGILIITIL) traverse the membrane as a helical segment. At 1113 to 1161 (LVRFRHRPTGKPGEGKNGVPLLWIKEPHLNYSPTCLEPPVLSIHPGTID) the chain is on the cytoplasmic side.

It localises to the membrane. In Xenopus tropicalis (Western clawed frog), this protein is Immunoglobulin superfamily member 3 (igsf3).